The chain runs to 99 residues: MTHVLVRRQGQGKKRRWDVNMTMCFFLFFFVFYVSFQIVLSSSASVGYSRLHLVASPPPPPPRKALRYSTAPFRGPLSRDDIYGDDKRVVHTGPNPLHN.

Positions 1–21 (MTHVLVRRQGQGKKRRWDVNM) are cleaved as a signal peptide. Residues 77–89 (LSRDDIYGDDKRV) show a composition bias toward basic and acidic residues. Positions 77–99 (LSRDDIYGDDKRVVHTGPNPLHN) are disordered. Pro-94 is subject to Hydroxyproline. An O-linked (Ara...) hydroxyproline glycan is attached at Pro-94.

This sequence belongs to the CLV3/ESR signal peptide family. The O-glycosylation (arabinosylation) of the hydroxyproline Pro-94 enhances binding affinity of the CLE17p peptide for its receptor. In terms of tissue distribution, mostly expressed in seedlings, roots, flowers, stems and apex, and, to a lower extent, in leaves and siliques.

The protein resides in the secreted. It is found in the extracellular space. Functionally, extracellular signal peptide that regulates cell fate. Represses root apical meristem maintenance. Regulates the transition of protophloem cells from proliferation to differentiation, thus impinging on postembryonic growth capacity of the root meristem; this signaling pathway requires CRN and CLV2. This chain is CLAVATA3/ESR (CLE)-related protein 17, found in Arabidopsis thaliana (Mouse-ear cress).